The sequence spans 1501 residues: EF-hand calcium-binding domain-containing protein 6 (1501 aa).

The tract at residues 18–47 is disordered; that stretch reads RKFTHSRPHSSPCRVYSRNGSPNKFRSSST. Over residues 35–47 the composition is skewed to polar residues; that stretch reads RNGSPNKFRSSST. 7 consecutive EF-hand domains span residues 70–105, 172–207, 297–332, 403–438, 439–474, 504–539, and 634–669; these read DRGDELQKAFQLLDTGQNLTVSKSELRRIITDFLMP, KNIKTVMKAFELIDVNKTGLVRPQELRRVLETFCMK, KSYEKVEKALSAGDPCKGGYVSFNYLKIVLDTFVYQ, DHSASLKKALLIINTKPDGPITREEFRYILNCMAVK, LSDSEFKELMQMLDPGDTGVVNTSMFIDLIEENCRM, RNLQAFYNMLRSYDLGDTGRIGRNNFKKIMHVFCPF, and QQDPAFKKRFLDFSKEPNGKINVHDFKKVLEDTGMP. The tract at residues 699–718 is disordered; that stretch reads EDPPMRGPETTPPQPPTPSK. EF-hand domains follow at residues 741–776, 847–882, 883–918, 964–999, 1069–1104, 1176–1211, and 1212–1247; these read ESFRDPYSAFFKTDADRDGIINMHDLHRLLLHLLLN, NRWSDLSKNFLETDNEGNGILRRRDIKNALYGFDIP, LTPREFEKLWARYDTEGKGHITYQEFLQKLGINYSP, DRHQDISKAFTKTDQSKTNYISICKMQEVLEECGCS, SSQLALSTAFSALDKEDTGFVKATEFGQVLKDFCYK, SHYHAITQEFENFDTMKTNTISREEFRAICNRRVQI, and LTDEQFDRLWNEMPVNAKGRLKYPDFLSRFSSETAA. Asp-754, Asp-756, Asp-758, and Asp-765 together coordinate Ca(2+). Residue Thr-884 is modified to Phosphothreonine. The disordered stretch occupies residues 1246 to 1307; sequence AATPMATGDS…TTVIPGTPPL (62 aa). Composition is skewed to polar residues over residues 1270 to 1279 and 1286 to 1301; these read GTRSALSLPT and SKSQSHPCTPASTTVI. Ser-1290 is modified (phosphoserine). Phosphothreonine is present on residues Thr-1294 and Thr-1304. The interval 1303 to 1501 is interaction with PARK7; it reads GTPPLQNCDP…YNDFLRAFLQ (199 aa). 3 consecutive EF-hand domains span residues 1359 to 1394, 1434 to 1469, and 1470 to 1501; these read ISKEECQQLIIKYDLKSNGKFAYCDFIQSCVLLLKA, HCWRPMRRTFKSYDEAGTGLLSVADFRTVLRQYSIN, and LSEEEFFHILEYYDKTLSSKISYNDFLRAFLQ. The tract at residues 1407-1501 is interaction with AR; sequence NAHKMKEAGA…YNDFLRAFLQ (95 aa).

As to quaternary structure, microtubule inner protein component of sperm flagellar doublet microtubules. Binds PARK7. Part of a ternary complex containing PARK7, EFCAB6/DJBP and AR. Specifically expressed in the testis.

It localises to the nucleus. It is found in the cytoplasm. Its subcellular location is the cytoskeleton. The protein resides in the flagellum axoneme. Negatively regulates the androgen receptor by recruiting histone deacetylase complex, and protein DJ-1 antagonizes this inhibition by abrogation of this complex. Microtubule inner protein (MIP) part of the dynein-decorated doublet microtubules (DMTs) in cilia axoneme, which is required for motile cilia beating. In Homo sapiens (Human), this protein is EF-hand calcium-binding domain-containing protein 6.